A 735-amino-acid polypeptide reads, in one-letter code: Polyribonucleotide nucleotidyltransferase (735 aa).

2 residues coordinate Mg(2+): Asp-515 and Asp-521. Residues 581 to 641 (PKLELFSVDP…KNVDAAKDYI (61 aa)) enclose the KH domain. The disordered stretch occupies residues 649-671 (NSRGFGKKPHGHDRRDKDRQKPT). Positions 675–734 (GDEFDGVVKSVVDFGAFIELKDGVDGLLHISKIKTPLNVGDRLKVCVSEQKGNKISLSLV) constitute an S1 motif domain.

This sequence belongs to the polyribonucleotide nucleotidyltransferase family. Requires Mg(2+) as cofactor.

Its subcellular location is the cytoplasm. It catalyses the reaction RNA(n+1) + phosphate = RNA(n) + a ribonucleoside 5'-diphosphate. Functionally, involved in mRNA degradation. Catalyzes the phosphorolysis of single-stranded polyribonucleotides processively in the 3'- to 5'-direction. The sequence is that of Polyribonucleotide nucleotidyltransferase from Campylobacter curvus (strain 525.92).